The sequence spans 450 residues: Beclin-1 (450 aa).

Met1 carries the post-translational modification N-acetylmethionine. 2 positions are modified to phosphoserine: Ser15 and Ser30. The interval 48–72 (TTAQAKPGETQEEETNSGEEPFIET) is disordered. 3 positions are modified to phosphoserine; by AMPK: Ser90, Ser93, and Ser96. The BH3 motif lies at 108 to 127 (TMENLSRRLKVTGDLFDIMS). The interval 112–159 (LSRRLKVTGDLFDIMSGQTDVDHPLCEECTDTLLDQLDTQLNVTENEC) is interaction with BCL2 and BCL2L1 isoform Bcl-X(L). A Phosphothreonine; by DAPK1 modification is found at Thr119. The stretch at 142–270 (DTLLDQLDTQ…LDKLKKTNVF (129 aa)) forms a coiled coil. The interval 245 to 450 (DELKSVENQM…AWVSSQFYNK (206 aa)) is evolutionary conserved domain (ECD). Glycyl lysine isopeptide (Lys-Gly) (interchain with G-Cter in ubiquitin) cross-links involve residues Lys402 and Lys437. A required for membrane-association region spans residues 425-450 (WTKALKFMLTNLKWGLAWVSSQFYNK).

It belongs to the beclin family. A homodimeric form is proposed to exist; this metastable form readily transits to ATG14- or UVRAG-containing complexes with BECN1:UVRAG being more stable than BECN1:ATG14. Component of the PI3K (PI3KC3/PI3K-III/class III phosphatidylinositol 3-kinase) complex the core of which is composed of the catalytic subunit PIK3C3, the regulatory subunit PIK3R4 and BECN1 associating with additional regulatory/auxiliary subunits to form alternative complex forms. Alternative complex forms containing a fourth regulatory subunit in a mutually exclusive manner are PI3K complex I (PI3KC3-C1) containing ATG14, and PI3K complex II (PI3KC3-C2) containing UVRAG. PI3KC3-C1 displays a V-shaped architecture with PIK3R4 serving as a bridge between PIK3C3 and the ATG14:BECN1 subcomplex. Both, PI3KC3-C1 and PI3KC3-C2, can associate with further regulatory subunits, such as RUBCN, SH3GLB1/Bif-1 and AMBRA1. PI3KC3-C1 probably associates with PIK3CB. Forms a complex with PPP2CA and AMBRA1; AMBRA1 and BECN1 components of the complex regulate MYC stability via different pathways. Component of the complex, at least composed of LRPPRC, BECN1 and BCL2; the interactions prevent BECN1 from forming an autophagy-inducing complex with PIK3C3. Interacts with AMBRA1, GOPC, GRID2. Interacts with BCL2 and BCL2L1 isoform Bcl-X(L); the interaction inhibits BECN1 function in promoting autophagy by interfering with the formation of the PI3K complex. Interacts with cytosolic HMGB1; inhibits the interaction of BECN1 and BCL2 leading to promotion of autophagy. Interacts with USP10, USP13, VMP1, DAPK1, RAB39A. Interacts with the poly-Gln domain of ATXN3; the interaction causes deubiquitination at Lys-402 and stabilizes BECN1. Interacts with SLAMF1. Interacts with TRIM5; the interaction causes activation of BECN1 by causing its dissociation from its inhibitors BCL2 and TAB2. Interacts with active ULK1 (phosphorylated on 'Ser-317') and MEFV simultaneously. Interacts with WDR81 and WDR91; negatively regulates the PI3 kinase/PI3K activity associated with endosomal membranes. Interacts with LAPTM4B; competes with EGFR for LAPTM4B binding; regulates EGFR activity. Interacts with TRIM50. Interacts with TRIM16. Interacts with ATG14; this interaction is increased in the absence of TMEM39A. Interacts with WASHC1; preventing interaction with AMBRA1 and the DCX(AMBRA1) complex and subsequent ubiquitination. Interacts with TRIM17. Interacts with BCL2L10/BCL-B (via BH1 domain). Interacts with SH3BGRL. Interacts with IRGM; enhancing BECN1-interacting partners and influencing the composition of the BECN1 complex. Interacts with ARMC3. Interacts with LRPPRC. In terms of assembly, (Microbial infection) Interacts with human cytomegalovirus/HHV-5 protein TRS1. As to quaternary structure, (Microbial infection) Interacts with murine gammaherpesvirus 68 M11. (Microbial infection) Interacts with herpes simplex virus 1 (HHV-1) protein ICP34.5; this interaction antagonizes the host autophagy response. In terms of assembly, (Microbial infection) Interacts with Epstein-Barr virus protein BHRF1; this interaction inhibits BECN1-mediated autophagy induction. Phosphorylation at Thr-119 by DAPK1 reduces its interaction with BCL2 and BCL2L1 and promotes induction of autophagy. In response to autophagic stimuli, phosphorylated at serine residues by AMPK in an ATG14-dependent manner, and this phosphorylation is critical for maximally efficient autophagy. Post-translationally, polyubiquitinated by NEDD4, both with 'Lys-11'- and 'Lys-63'-linkages. 'Lys-11'-linked polyubiquitination leads to degradation and is enhanced when the stabilizing interaction partner VPS34 is depleted. Deubiquitinated by USP10 and USP13, leading to stabilize the PIK3C3/VPS34-containing complexes. Polyubiquitinated at Lys-402 with 'Lys-48'-linkages. 'Lys-48'-linked polyubiquitination of Lys-402 leads to degradation. Deubiquitinated by ATXN3, leading to stabilization. Ubiquitinated at Lys-437 via 'Lys-63'-linkage by the DCX(AMBRA1) complex, thereby increasing the association between BECN1 and PIK3C3 to promote PIK3C3 activity. 'Lys-48'-linked ubiquitination by RNF216 leads to proteasomal degradation and autophagy inhibition. In terms of processing, proteolytically processed by caspases including CASP8 and CASP3; the C-terminal fragments lack autophagy-inducing capacity and are proposed to induce apoptosis. Thus the cleavage is proposed to be an determinant to switch from autophagy to apoptosis pathways affecting cellular homeostasis including viral infections and survival of tumor cells. As to expression, ubiquitous.

The protein localises to the cytoplasm. It localises to the golgi apparatus. It is found in the trans-Golgi network membrane. Its subcellular location is the endosome membrane. The protein resides in the endoplasmic reticulum membrane. The protein localises to the mitochondrion membrane. It localises to the endosome. It is found in the cytoplasmic vesicle. Its subcellular location is the autophagosome. The protein resides in the mitochondrion. The protein localises to the nucleus. Functionally, plays a central role in autophagy. Acts as a core subunit of the PI3K complex that mediates formation of phosphatidylinositol 3-phosphate; different complex forms are believed to play a role in multiple membrane trafficking pathways: PI3KC3-C1 is involved in initiation of autophagosomes and PI3KC3-C2 in maturation of autophagosomes and endocytosis. Involved in regulation of degradative endocytic trafficking and required for the abscission step in cytokinesis, probably in the context of PI3KC3-C2. Essential for the formation of PI3KC3-C2 but not PI3KC3-C1 PI3K complex forms. Involved in endocytosis. May play a role in antiviral host defense. Its function is as follows. Beclin-1-C 35 kDa localized to mitochondria can promote apoptosis; it induces the mitochondrial translocation of BAX and the release of proapoptotic factors. In terms of biological role, (Microbial infection) Protects against infection by a neurovirulent strain of Sindbis virus. This Homo sapiens (Human) protein is Beclin-1 (BECN1).